Reading from the N-terminus, the 949-residue chain is AP-1 complex subunit beta-1 (949 aa).

The residue at position 318 (Lys318) is an N6-acetyllysine. A 3'-nitrotyrosine modification is found at Tyr574. The segment at 584–625 (GGRGVVHKSLPPRTASSESAESPETAPTGAPPGEQPDVIPAQ) is disordered. Residues 594–611 (PPRTASSESAESPETAPT) are compositionally biased toward low complexity.

This sequence belongs to the adaptor complexes large subunit family. Adaptor protein complex 1 (AP-1) is a heterotetramer composed of two large adaptins (gamma-type subunit AP1G1 and beta-type subunit AP1B1), a medium adaptin (mu-type subunit AP1M1 or AP1M2) and a small adaptin (sigma-type subunit AP1S1 or AP1S2 or AP1S3). Widely expressed.

The protein resides in the golgi apparatus. It localises to the cytoplasmic vesicle. It is found in the clathrin-coated vesicle membrane. Functionally, subunit of clathrin-associated adaptor protein complex 1 that plays a role in protein sorting in the late-Golgi/trans-Golgi network (TGN) and/or endosomes. The AP complexes mediate both the recruitment of clathrin to membranes and the recognition of sorting signals within the cytosolic tails of transmembrane cargo molecules. The protein is AP-1 complex subunit beta-1 (AP1B1) of Homo sapiens (Human).